The sequence spans 324 residues: Acetyl-coenzyme A carboxylase carboxyl transferase subunit alpha (324 aa).

The CoA carboxyltransferase C-terminal domain maps to 44–298 (QLERRAEELR…KQTLIDTIDE (255 aa)).

The protein belongs to the AccA family. In terms of assembly, acetyl-CoA carboxylase is a heterohexamer composed of biotin carboxyl carrier protein (AccB), biotin carboxylase (AccC) and two subunits each of ACCase subunit alpha (AccA) and ACCase subunit beta (AccD).

Its subcellular location is the cytoplasm. The enzyme catalyses N(6)-carboxybiotinyl-L-lysyl-[protein] + acetyl-CoA = N(6)-biotinyl-L-lysyl-[protein] + malonyl-CoA. The protein operates within lipid metabolism; malonyl-CoA biosynthesis; malonyl-CoA from acetyl-CoA: step 1/1. Component of the acetyl coenzyme A carboxylase (ACC) complex. First, biotin carboxylase catalyzes the carboxylation of biotin on its carrier protein (BCCP) and then the CO(2) group is transferred by the carboxyltransferase to acetyl-CoA to form malonyl-CoA. The polypeptide is Acetyl-coenzyme A carboxylase carboxyl transferase subunit alpha (Rippkaea orientalis (strain PCC 8801 / RF-1) (Cyanothece sp. (strain PCC 8801))).